A 156-amino-acid chain; its full sequence is ATP synthase subunit b (156 aa).

The chain crosses the membrane as a helical span at residues 7–27 (LFVQAIVFAILVWFTMKFVWP).

It belongs to the ATPase B chain family. In terms of assembly, F-type ATPases have 2 components, F(1) - the catalytic core - and F(0) - the membrane proton channel. F(1) has five subunits: alpha(3), beta(3), gamma(1), delta(1), epsilon(1). F(0) has three main subunits: a(1), b(2) and c(10-14). The alpha and beta chains form an alternating ring which encloses part of the gamma chain. F(1) is attached to F(0) by a central stalk formed by the gamma and epsilon chains, while a peripheral stalk is formed by the delta and b chains.

Its subcellular location is the cell inner membrane. F(1)F(0) ATP synthase produces ATP from ADP in the presence of a proton or sodium gradient. F-type ATPases consist of two structural domains, F(1) containing the extramembraneous catalytic core and F(0) containing the membrane proton channel, linked together by a central stalk and a peripheral stalk. During catalysis, ATP synthesis in the catalytic domain of F(1) is coupled via a rotary mechanism of the central stalk subunits to proton translocation. Its function is as follows. Component of the F(0) channel, it forms part of the peripheral stalk, linking F(1) to F(0). The polypeptide is ATP synthase subunit b (Polaromonas sp. (strain JS666 / ATCC BAA-500)).